The chain runs to 262 residues: Indole-3-glycerol phosphate synthase (262 aa).

Belongs to the TrpC family.

The catalysed reaction is 1-(2-carboxyphenylamino)-1-deoxy-D-ribulose 5-phosphate + H(+) = (1S,2R)-1-C-(indol-3-yl)glycerol 3-phosphate + CO2 + H2O. The protein operates within amino-acid biosynthesis; L-tryptophan biosynthesis; L-tryptophan from chorismate: step 4/5. The chain is Indole-3-glycerol phosphate synthase from Bordetella pertussis (strain Tohama I / ATCC BAA-589 / NCTC 13251).